The primary structure comprises 685 residues: MSTDIKFAITGVPTPPSSNGAVPLRRELRDLQQNYPEQFNLYLLGLRDFQGLDEAKLDSYYQVAGIHGMPFKPWAGVPSDTDWSQPGSSGFGGYCTHSSILFITWHRPYLALYEQALYASVQAVAQKFPVEGGLRAKYVAAAKDFRAPYFDWASQPPKGTLAFPESLSSRTIQVVDVDGKTKSINNPLHRFTFHPVNPSPGDFSAAWSRYPSTVRYPNRLTGASRDERIAPILANELASLRNNVSLLLLSYKDFDAFSYNRWDPNTNPGDFGSLEDVHNEIHDRTGGNGHMSSLEVSAFDPLFWLHHVNVDRLWSIWQDLNPNSFMTPRPAPYSTFVAQEGESQSKSTPLEPFWDKSAANFWTSEQVKDSITFGYAYPETQKWKYSSVKEYQAAIRKSVTALYGSNVFANFVENVADRTPALKKPQATGEESKSTVSAAAAHAVELSGAKKVAEKVHNVFQHAEEKAQKPVVPVKDTKAESSTAAGMMIGLSIKRPSKLTASPGPIPESLKYLAPDGKYTDWIVNVRAQKHGLGQSFRVIVFLGEFNPDPETWDDEFNCVGRVSVLGRSAETQCGKCRKDNANGLIVSGTVPLTSALLQDIVGGELQSLKPEDVIPHLRANLKWKVALFNGDEYNLEEVPDLKVSVASTEVTIDEEGLPHYSRQYTVYPEITEGKPCGHGPEDHI.

An N-acetylserine modification is found at serine 2. Cu cation contacts are provided by histidine 67, histidine 97, histidine 106, histidine 278, histidine 282, and histidine 307. The 2'-(S-cysteinyl)-histidine (Cys-His) cross-link spans 95–97 (CTH). The propeptide at 409–685 (ANFVENVADR…PCGHGPEDHI (277 aa)) is could be involved in enzyme activation.

Belongs to the tyrosinase family. Cu(2+) serves as cofactor.

The catalysed reaction is 2 L-dopa + O2 = 2 L-dopaquinone + 2 H2O. The enzyme catalyses L-tyrosine + O2 = L-dopaquinone + H2O. This is a copper-containing oxidase that functions in the formation of pigments such as melanins and other polyphenolic compounds. This Neurospora crassa (strain ATCC 24698 / 74-OR23-1A / CBS 708.71 / DSM 1257 / FGSC 987) protein is Tyrosinase (T).